The following is a 346-amino-acid chain: tRNA N6-adenosine threonylcarbamoyltransferase (346 aa).

Residues histidine 110 and histidine 114 each coordinate Fe cation. Substrate contacts are provided by residues 132 to 136 (LLSGG), aspartate 165, glycine 178, and asparagine 274. Aspartate 298 lines the Fe cation pocket.

The protein belongs to the KAE1 / TsaD family. Fe(2+) is required as a cofactor.

It is found in the cytoplasm. The catalysed reaction is L-threonylcarbamoyladenylate + adenosine(37) in tRNA = N(6)-L-threonylcarbamoyladenosine(37) in tRNA + AMP + H(+). In terms of biological role, required for the formation of a threonylcarbamoyl group on adenosine at position 37 (t(6)A37) in tRNAs that read codons beginning with adenine. Is involved in the transfer of the threonylcarbamoyl moiety of threonylcarbamoyl-AMP (TC-AMP) to the N6 group of A37, together with TsaE and TsaB. TsaD likely plays a direct catalytic role in this reaction. The sequence is that of tRNA N6-adenosine threonylcarbamoyltransferase from Borreliella afzelii (strain PKo) (Borrelia afzelii).